The primary structure comprises 253 residues: 5'/3'-nucleotidase SurE (253 aa).

A divalent metal cation-binding residues include aspartate 8, aspartate 9, serine 39, and asparagine 92.

It belongs to the SurE nucleotidase family. A divalent metal cation serves as cofactor.

It is found in the cytoplasm. It catalyses the reaction a ribonucleoside 5'-phosphate + H2O = a ribonucleoside + phosphate. The catalysed reaction is a ribonucleoside 3'-phosphate + H2O = a ribonucleoside + phosphate. It carries out the reaction [phosphate](n) + H2O = [phosphate](n-1) + phosphate + H(+). Its function is as follows. Nucleotidase with a broad substrate specificity as it can dephosphorylate various ribo- and deoxyribonucleoside 5'-monophosphates and ribonucleoside 3'-monophosphates with highest affinity to 3'-AMP. Also hydrolyzes polyphosphate (exopolyphosphatase activity) with the preference for short-chain-length substrates (P20-25). Might be involved in the regulation of dNTP and NTP pools, and in the turnover of 3'-mononucleotides produced by numerous intracellular RNases (T1, T2, and F) during the degradation of various RNAs. The chain is 5'/3'-nucleotidase SurE from Escherichia coli O7:K1 (strain IAI39 / ExPEC).